Reading from the N-terminus, the 40-residue chain is Small polypeptide DEVIL 3 (40 aa).

The required for DVL/RTFL small polypeptide activity stretch occupies residues 9–40 (PCNKKLGGYLKEQKGRLYIIRRCVVMLICWHD). A helical transmembrane segment spans residues 12-28 (KKLGGYLKEQKGRLYII).

The protein belongs to the DVL/RTFL small polypeptides family. Mostly expressed in flowers and stems, and, to a lower extent, in roots and leaves.

Its subcellular location is the cell membrane. In terms of biological role, small polypeptide acting as a regulatory molecule which coordinates cellular responses required for differentiation, growth and development, including leaves shape, pedicule elongation, inflorescence organization and fruit maturation, probably by restricting polar cell proliferation in lateral organs and coordinating socket cell recruitment and differentiation at trichome sites. This Arabidopsis thaliana (Mouse-ear cress) protein is Small polypeptide DEVIL 3.